A 376-amino-acid polypeptide reads, in one-letter code: 3-dehydroquinate synthase (376 aa).

NAD(+)-binding positions include 115–119 (GVIGD), 139–140 (TS), lysine 152, and lysine 161. 3 residues coordinate Zn(2+): glutamate 194, histidine 256, and histidine 275.

It belongs to the sugar phosphate cyclases superfamily. Dehydroquinate synthase family. The cofactor is Co(2+). Zn(2+) is required as a cofactor. NAD(+) serves as cofactor.

The protein localises to the cytoplasm. It catalyses the reaction 7-phospho-2-dehydro-3-deoxy-D-arabino-heptonate = 3-dehydroquinate + phosphate. Its pathway is metabolic intermediate biosynthesis; chorismate biosynthesis; chorismate from D-erythrose 4-phosphate and phosphoenolpyruvate: step 2/7. In terms of biological role, catalyzes the conversion of 3-deoxy-D-arabino-heptulosonate 7-phosphate (DAHP) to dehydroquinate (DHQ). This Rhizobium leguminosarum bv. trifolii (strain WSM2304) protein is 3-dehydroquinate synthase.